We begin with the raw amino-acid sequence, 405 residues long: Intraflagellar transport protein 57 homolog (405 aa).

The stretch at 252–380 forms a coiled coil; sequence ETLKTNILEN…AQLNLEVALL (129 aa).

It belongs to the IFT57 family.

It is found in the cytoplasm. Its subcellular location is the cytoskeleton. It localises to the cilium basal body. Functionally, required for the formation of cilia. This chain is Intraflagellar transport protein 57 homolog, found in Drosophila melanogaster (Fruit fly).